The chain runs to 96 residues: Small ribosomal subunit protein bS6 (96 aa).

Belongs to the bacterial ribosomal protein bS6 family.

Binds together with bS18 to 16S ribosomal RNA. This chain is Small ribosomal subunit protein bS6, found in Bacillus thuringiensis subsp. konkukian (strain 97-27).